The primary structure comprises 208 residues: Protein GrpE (208 aa).

The segment covering M1 to T12 has biased composition (basic and acidic residues). A disordered region spans residues M1–N51. The span at E13 to Q23 shows a compositional bias: polar residues. Over residues E42–N51 the composition is skewed to acidic residues.

This sequence belongs to the GrpE family. Homodimer.

The protein localises to the cytoplasm. Functionally, participates actively in the response to hyperosmotic and heat shock by preventing the aggregation of stress-denatured proteins, in association with DnaK and GrpE. It is the nucleotide exchange factor for DnaK and may function as a thermosensor. Unfolded proteins bind initially to DnaJ; upon interaction with the DnaJ-bound protein, DnaK hydrolyzes its bound ATP, resulting in the formation of a stable complex. GrpE releases ADP from DnaK; ATP binding to DnaK triggers the release of the substrate protein, thus completing the reaction cycle. Several rounds of ATP-dependent interactions between DnaJ, DnaK and GrpE are required for fully efficient folding. The polypeptide is Protein GrpE (Staphylococcus aureus (strain USA300)).